A 434-amino-acid polypeptide reads, in one-letter code: Chaperone SurA (434 aa).

Positions 1–22 are cleaved as a signal peptide; the sequence is MKHSKKIIFALLALAMSNTSMA. PpiC domains follow at residues 173–274 and 283–383; these read DVEF…KVVD and VEEV…QLES.

It localises to the periplasm. It carries out the reaction [protein]-peptidylproline (omega=180) = [protein]-peptidylproline (omega=0). Its function is as follows. Chaperone involved in the correct folding and assembly of outer membrane proteins. Recognizes specific patterns of aromatic residues and the orientation of their side chains, which are found more frequently in integral outer membrane proteins. May act in both early periplasmic and late outer membrane-associated steps of protein maturation. This is Chaperone SurA from Shewanella frigidimarina (strain NCIMB 400).